We begin with the raw amino-acid sequence, 535 residues long: Cytochrome c oxidase subunit 1 (535 aa).

A helical transmembrane segment spans residues 21–43; the sequence is VLYFIFALFSAMIGTGLSAIIRL. Residues Glu-44 and Gly-49 each coordinate Ca(2+). Transmembrane regions (helical) follow at residues 63 to 85, 106 to 128, 153 to 175, 188 to 210, 242 to 264, and 271 to 293; these read VITA…GGFG, ISFW…EAGA, IFSL…TTFI, PLFA…VLAA, YWWN…SHAV, and PVFG…FCVW. His-67 serves as a coordination point for Fe(II)-heme a. His-246 is a binding site for Cu cation. The segment at residues 246-250 is a cross-link (1'-histidyl-3'-tyrosine (His-Tyr)); the sequence is HPEVY. Tyr-250 provides a ligand contact to O2. Cu cation is bound by residues His-295 and His-296. 2 helical membrane passes run 308–330 and 342–364; these read AYFT…SWLA and TALF…VVLA. Residues His-373 and Asp-374 each coordinate Mg(2+). Helical transmembrane passes span 379 to 401, 414 to 436, and 456 to 478; these read VAHF…WYLW, LSHI…MHFL, and NQVA…YVVY. His-381 is a heme a3 binding site. His-383 contacts Fe(II)-heme a.

The protein belongs to the heme-copper respiratory oxidase family. As to quaternary structure, component of the cytochrome c oxidase (complex IV, CIV), a multisubunit enzyme composed of a catalytic core of 3 subunits and several supernumerary subunits. The complex exists as a monomer or a dimer and forms supercomplexes (SCs) in the inner mitochondrial membrane with ubiquinol-cytochrome c oxidoreductase (cytochrome b-c1 complex, complex III, CIII). Requires heme as cofactor. It depends on Cu cation as a cofactor.

It is found in the mitochondrion inner membrane. It carries out the reaction 4 Fe(II)-[cytochrome c] + O2 + 8 H(+)(in) = 4 Fe(III)-[cytochrome c] + 2 H2O + 4 H(+)(out). The protein operates within energy metabolism; oxidative phosphorylation. Functionally, component of the cytochrome c oxidase, the last enzyme in the mitochondrial electron transport chain which drives oxidative phosphorylation. The respiratory chain contains 3 multisubunit complexes succinate dehydrogenase (complex II, CII), ubiquinol-cytochrome c oxidoreductase (cytochrome b-c1 complex, complex III, CIII) and cytochrome c oxidase (complex IV, CIV), that cooperate to transfer electrons derived from NADH and succinate to molecular oxygen, creating an electrochemical gradient over the inner membrane that drives transmembrane transport and the ATP synthase. Cytochrome c oxidase is the component of the respiratory chain that catalyzes the reduction of oxygen to water. Electrons originating from reduced cytochrome c in the intermembrane space (IMS) are transferred via the dinuclear copper A center (CU(A)) of subunit 2 and heme A of subunit 1 to the active site in subunit 1, a binuclear center (BNC) formed by heme A3 and copper B (CU(B)). The BNC reduces molecular oxygen to 2 water molecules using 4 electrons from cytochrome c in the IMS and 4 protons from the mitochondrial matrix. This chain is Cytochrome c oxidase subunit 1 (COX1), found in Yarrowia lipolytica (strain CLIB 122 / E 150) (Yeast).